Here is a 1379-residue protein sequence, read N- to C-terminus: ABC multidrug transporter MDR2 (1379 aa).

Residues 65–85 form a helical membrane-spanning segment; it reads IALIVIGTIAGIGAGIPFPLL. Positions 69–367 constitute an ABC transmembrane type-1 1 domain; the sequence is VIGTIAGIGA…MAPFMHIFAS (299 aa). Asn-97 carries N-linked (GlcNAc...) asparagine glycosylation. The next 5 helical transmembrane spans lie at 119–139, 193–213, 215–235, 301–321, and 336–356; these read VLQV…HTGC, KVGL…VAFL, VATI…MAFG, IQFG…FWQG, and VSVG…FVLS. One can recognise an ABC transporter 1 domain in the interval 403–682; it reads IELQDVTFNY…DGVYAGMVRL (280 aa). An ATP-binding site is contributed by 438–445; it reads GTSGSGKS. Residues Asn-552 and Asn-633 are each glycosylated (N-linked (GlcNAc...) asparagine). The segment at 738–758 is disordered; it reads YMPEEADSLPTEPENEKEKPK. Transmembrane regions (helical) follow at residues 781 to 801, 820 to 840, 881 to 901, and 920 to 942; these read LGLI…VIFG, GMLF…AVIV, LLVA…GTTI, and VIAW…SGVL. In terms of domain architecture, ABC transmembrane type-1 2 spans 781-1068; sequence LGLITSIMIG…MFALVPDISK (288 aa). Asn-989 is a glycosylation site (N-linked (GlcNAc...) asparagine). The next 2 helical transmembrane spans lie at 1008-1028 and 1032-1052; these read FWLS…YWWG and ILAG…LLFS. An ABC transporter 2 domain is found at 1135 to 1374; the sequence is VQFRNVHFRY…CESYRANVIH (240 aa). Residue 1170–1177 participates in ATP binding; the sequence is GPSGSGKS.

The protein belongs to the ABC transporter superfamily. ABCB family. Multidrug resistance exporter (TC 3.A.1.201) subfamily.

Its subcellular location is the cell membrane. Pleiotropic ABC efflux transporter that may be involved in the modulation susceptibility to a wide range of unrelated cytotoxic compounds. This Trichophyton interdigitale (strain MR816) protein is ABC multidrug transporter MDR2.